We begin with the raw amino-acid sequence, 240 residues long: Adenylate dimethylallyltransferase (240 aa).

The protein belongs to the isopentenyl transferase family.

The catalysed reaction is dimethylallyl diphosphate + AMP = N(6)-(dimethylallyl)adenosine 5'-phosphate + diphosphate. Its function is as follows. Transfers dimethylallyl groups to AMP as part of the biosynthesis of cytokinin phytohormones. This chain is Adenylate dimethylallyltransferase (izt), found in Agrobacterium fabrum (strain C58 / ATCC 33970) (Agrobacterium tumefaciens (strain C58)).